A 528-amino-acid chain; its full sequence is Na(+)/H(+) antiporter NhaB (528 aa).

Transmembrane regions (helical) follow at residues 23 to 45 (FAILSFLVINPVVFYLNPFVAGW), 66 to 86 (PGGLLAIEAVIIGMTSPSQVL), 95 to 115 (VLLLLIFMVAGIYFMKQLLLF), 139 to 159 (AFLSAFLDALTVIAVIIAVAV), 203 to 223 (LLMHAGVGTALGGVCTMVGEP), 241 to 261 (LRMSPVTVPVFVAGVLTCFLV), 310 to 330 (LIIGLAFHLASVGLIGLSVII), 349 to 369 (EEALPFTALLAVFFAIVGVII), 390 to 410 (LVIFYIAIGLLSMVSDNVFVG), 448 to 468 (ATPNGQAAFLFLLTSAIAPLI), and 476 to 496 (VWMALPYTIVLSIVGILAIQF).

It belongs to the NhaB Na(+)/H(+) (TC 2.A.34) antiporter family.

It localises to the cell inner membrane. The enzyme catalyses 2 Na(+)(in) + 3 H(+)(out) = 2 Na(+)(out) + 3 H(+)(in). In terms of biological role, na(+)/H(+) antiporter that extrudes sodium in exchange for external protons. The chain is Na(+)/H(+) antiporter NhaB from Shewanella piezotolerans (strain WP3 / JCM 13877).